Consider the following 417-residue polypeptide: 4-hydroxy-3-methylbut-2-en-1-yl diphosphate synthase (flavodoxin) (417 aa).

Residues Cys304, Cys307, Cys350, and Glu357 each contribute to the [4Fe-4S] cluster site.

The protein belongs to the IspG family. Requires [4Fe-4S] cluster as cofactor.

It carries out the reaction (2E)-4-hydroxy-3-methylbut-2-enyl diphosphate + oxidized [flavodoxin] + H2O + 2 H(+) = 2-C-methyl-D-erythritol 2,4-cyclic diphosphate + reduced [flavodoxin]. Its pathway is isoprenoid biosynthesis; isopentenyl diphosphate biosynthesis via DXP pathway; isopentenyl diphosphate from 1-deoxy-D-xylulose 5-phosphate: step 5/6. Its function is as follows. Converts 2C-methyl-D-erythritol 2,4-cyclodiphosphate (ME-2,4cPP) into 1-hydroxy-2-methyl-2-(E)-butenyl 4-diphosphate. This Sinorhizobium medicae (strain WSM419) (Ensifer medicae) protein is 4-hydroxy-3-methylbut-2-en-1-yl diphosphate synthase (flavodoxin).